A 280-amino-acid polypeptide reads, in one-letter code: Large ribosomal subunit protein uL2 (280 aa).

2 disordered regions span residues 27-59 and 225-280; these read STPEKSLVRPLHGRGGRNAHGRITTRHKGGGHK and VMNP…KHSR. Composition is skewed to basic residues over residues 37–59 and 268–280; these read LHGRGGRNAHGRITTRHKGGGHK and IVRRRRTGKKHSR.

Belongs to the universal ribosomal protein uL2 family. As to quaternary structure, part of the 50S ribosomal subunit. Forms a bridge to the 30S subunit in the 70S ribosome.

Functionally, one of the primary rRNA binding proteins. Required for association of the 30S and 50S subunits to form the 70S ribosome, for tRNA binding and peptide bond formation. It has been suggested to have peptidyltransferase activity; this is somewhat controversial. Makes several contacts with the 16S rRNA in the 70S ribosome. This Mycobacterium bovis (strain ATCC BAA-935 / AF2122/97) protein is Large ribosomal subunit protein uL2.